Reading from the N-terminus, the 932-residue chain is Serine/threonine-protein kinase PknD (932 aa).

One can recognise a Protein kinase domain in the interval 4–291 (YDIVRIIGKG…ELKEDIESHL (288 aa)). ATP is bound by residues 10–18 (IGKGGMGEV) and lysine 33. Catalysis depends on aspartate 138, which acts as the Proton acceptor.

The protein belongs to the protein kinase superfamily. Ser/Thr protein kinase family. Autophosphorylated on serine and threonine residues.

It carries out the reaction L-seryl-[protein] + ATP = O-phospho-L-seryl-[protein] + ADP + H(+). The catalysed reaction is L-threonyl-[protein] + ATP = O-phospho-L-threonyl-[protein] + ADP + H(+). Functionally, together with the serine/threonine kinase Pkn1, may play a role in the specific interactions with host proteins during intracellular growth. The polypeptide is Serine/threonine-protein kinase PknD (Chlamydia pneumoniae (Chlamydophila pneumoniae)).